The sequence spans 424 residues: MFGGDVSAASVLPSHPISGSCDGFQAEGSDHHHSTMTPFQESQRNVYQILYGHPANDDFPRPITPLQITIPEGDASPTVPVSCGVVNGKMHLNLFMCPGIHQPCIEVGNDLLSPKQFTIRGDKERQKDWKASIRVGRSSLRTHMEAMTIDFYEHMNRCSGKCQSRNYVNAPSEEVLQARKSKRTSEAGQLKYEIENEMAGKEADNDDNRKSAKKARGRPRGSVNKPRQMVKMEPQDDRFFEEFFIDAPPLQSMSSNEEPTSSNKESNECTPFNDILNCLQNDPMNFWSQMQQTGVIGHFCDDIIVSAINLKQSVMDNPVTPTTANMLTRTAFALGIPPVVVHRVQSIERNAYQQRKHDEMFNDIQSTLAEEHSVKYQPRTSSSSQESLHTAREFTEEKVEELIDVCKYDDYPESECLPGPSHIQ.

One can recognise an SAND domain in the interval 65 to 150; the sequence is PLQITIPEGD…RTHMEAMTID (86 aa). Disordered regions lie at residues 178–228 and 371–394; these read ARKS…KPRQ and EHSVKYQPRTSSSSQESLHTAREF. Positions 192–210 are enriched in basic and acidic residues; it reads YEIENEMAGKEADNDDNRK. Over residues 378-388 the composition is skewed to polar residues; sequence PRTSSSSQESL.

Its subcellular location is the chromosome. It is found in the nucleus. In terms of biological role, transcription factor which controls spermatogenesis and sperm cell fate by regulation of sperm gene expression. This chain is Transcription regulator spe-44, found in Caenorhabditis elegans.